Consider the following 509-residue polypeptide: Kynureninase 1 (509 aa).

Residues L154, T155, 183–186, D270, H273, and Y295 contribute to the pyridoxal 5'-phosphate site; that span reads FPSD. An N6-(pyridoxal phosphate)lysine modification is found at K296. Residues W345 and N373 each contribute to the pyridoxal 5'-phosphate site.

Belongs to the kynureninase family. As to quaternary structure, homodimer. Pyridoxal 5'-phosphate serves as cofactor.

The protein resides in the cytoplasm. The enzyme catalyses L-kynurenine + H2O = anthranilate + L-alanine + H(+). It carries out the reaction 3-hydroxy-L-kynurenine + H2O = 3-hydroxyanthranilate + L-alanine + H(+). It functions in the pathway amino-acid degradation; L-kynurenine degradation; L-alanine and anthranilate from L-kynurenine: step 1/1. The protein operates within cofactor biosynthesis; NAD(+) biosynthesis; quinolinate from L-kynurenine: step 2/3. In terms of biological role, catalyzes the cleavage of L-kynurenine (L-Kyn) and L-3-hydroxykynurenine (L-3OHKyn) into anthranilic acid (AA) and 3-hydroxyanthranilic acid (3-OHAA), respectively. In Chaetomium globosum (strain ATCC 6205 / CBS 148.51 / DSM 1962 / NBRC 6347 / NRRL 1970) (Soil fungus), this protein is Kynureninase 1.